The chain runs to 514 residues: MSVSKKPMVLVILDGYGYREEQQDNAILNAKTPVMDALWAKRPHTLIDASGLEVGLPDRQMGNSEVGHVNLGAGRIVYQDLTRLDVEIKERTFFANPVLTNAVDQAKNAGKAVHIMGLLSAGGVHSHEDHIMAMVELAAERGAEKIYLHAFLDGRDTPPRSAEASLKKFEDKFAALGKGRVASIVGRYYAMDRDNRWDRVEKAYDLMTLAQGEFQADTAVAGLQAAYARDENDEFVKATVIRAEGQADAAMEDGDTLIFMNFRADRAREITRAFVNADFDGFARKKVVNLNFVMLTEYAADIKTAVAYPPASLANTFGEWMAKNDKTQLRISETEKYAHVTFFFNGGVEEPFAGEERILINSPKVATYDLQPEMSSAELTEKLVAAIESGKYDTIICNYPNGDMVGHTGVMEAAIKAVEALDNCIEQVTKAVESVGGQLLITADHGNAEQMRDPATGQAHTAHTNLPVPLIYVGEKNVKAVEGGKLSDIAPTMLSLMGMEIPQEMTGKPLFIVE.

Mn(2+)-binding residues include aspartate 14 and serine 64. Residue serine 64 is the Phosphoserine intermediate of the active site. Substrate-binding positions include histidine 125, 155-156, arginine 187, arginine 193, 263-266, and lysine 336; these read RD and RADR. The Mn(2+) site is built by aspartate 403, histidine 407, aspartate 444, histidine 445, and histidine 463.

It belongs to the BPG-independent phosphoglycerate mutase family. Monomer. Mn(2+) serves as cofactor.

It carries out the reaction (2R)-2-phosphoglycerate = (2R)-3-phosphoglycerate. Its pathway is carbohydrate degradation; glycolysis; pyruvate from D-glyceraldehyde 3-phosphate: step 3/5. In terms of biological role, catalyzes the interconversion of 2-phosphoglycerate and 3-phosphoglycerate. The chain is 2,3-bisphosphoglycerate-independent phosphoglycerate mutase from Salmonella paratyphi A (strain ATCC 9150 / SARB42).